The chain runs to 147 residues: Protein disulfide isomerase-like 5-1 (147 aa).

Positions 1-29 are cleaved as a signal peptide; the sequence is MDLAPGRRARLLVALALVVLVALAARSGA. One can recognise a Thioredoxin domain in the interval 30–137; sequence EVITLTEETF…LKNFVSDEAE (108 aa). Residues Cys59 and Cys62 each act as nucleophile in the active site. The cysteines at positions 59 and 62 are disulfide-linked.

Belongs to the protein disulfide isomerase family.

Functionally, acts as a protein-folding catalyst that interacts with nascent polypeptides to catalyze the formation, isomerization, and reduction or oxidation of disulfide bonds. May play a role in storage protein biogenesis. This Oryza sativa subsp. japonica (Rice) protein is Protein disulfide isomerase-like 5-1 (PDIL5-1).